The sequence spans 405 residues: S-adenosylmethionine synthase (405 aa).

H19 lines the ATP pocket. D21 is a Mg(2+) binding site. E47 contributes to the K(+) binding site. Residues E60 and Q103 each contribute to the L-methionine site. The flexible loop stretch occupies residues 103–113 (QSADIAQGVDK). ATP-binding positions include 179-181 (DGK), 246-247 (RF), D255, 261-262 (RK), A278, and K282. D255 is a binding site for L-methionine. L-methionine is bound at residue K286.

This sequence belongs to the AdoMet synthase family. Homotetramer; dimer of dimers. Mg(2+) is required as a cofactor. Requires K(+) as cofactor.

The protein localises to the cytoplasm. It catalyses the reaction L-methionine + ATP + H2O = S-adenosyl-L-methionine + phosphate + diphosphate. It participates in amino-acid biosynthesis; S-adenosyl-L-methionine biosynthesis; S-adenosyl-L-methionine from L-methionine: step 1/1. In terms of biological role, catalyzes the formation of S-adenosylmethionine (AdoMet) from methionine and ATP. The overall synthetic reaction is composed of two sequential steps, AdoMet formation and the subsequent tripolyphosphate hydrolysis which occurs prior to release of AdoMet from the enzyme. The sequence is that of S-adenosylmethionine synthase from Shouchella clausii (strain KSM-K16) (Alkalihalobacillus clausii).